A 367-amino-acid polypeptide reads, in one-letter code: C-C chemokine receptor type 6 (367 aa).

At 1-39 (MNSTESYFGTDDYDNTEYYSIPPDHGPCSLEEVRNFTKV) the chain is on the extracellular side. 2 N-linked (GlcNAc...) asparagine glycosylation sites follow: N2 and N35. The chain crosses the membrane as a helical span at residues 40–66 (FVPIAYSLICVFGLLGNIMVVMTFAFY). Residues 67 to 75 (KKARSMTDV) are Cytoplasmic-facing. A helical membrane pass occupies residues 76 to 96 (YLLNMAITDILFVLTLPFWAV). Residues 97–111 (THATNTWVFSDALCK) are Extracellular-facing. C110 and C189 are joined by a disulfide. The helical transmembrane segment at 112–133 (LMKGTYAVNFNCGMLLLACISM) threads the bilayer. Residues 134-151 (DRYIAIVQATKSFRVRSR) lie on the Cytoplasmic side of the membrane. Residues 152 to 172 (TLTHSKVICVAVWFISIIISS) form a helical membrane-spanning segment. The Extracellular segment spans residues 173–203 (PTFIFNKKYELQDRDVCEPRYRSVSEPITWK). The chain crosses the membrane as a helical span at residues 204–230 (LLGMGLELFFGFFTPLLFMVFCYLFII). Over 231 to 246 (KTLVQAQNSKRHRAIR) the chain is Cytoplasmic. Residues 247–271 (VVIAVVLVFLACQIPHNMVLLVTAV) form a helical membrane-spanning segment. Over 272-295 (NTGKVGRSCSTEKVLAYTRNVAEV) the chain is Extracellular. A helical membrane pass occupies residues 296 to 313 (LAFLHCCLNPVLYAFIGQ). Residues 314–367 (KFRNYFMKIMKDVWCMRRKNKMPGFLCARVYSESYISRQTSETVENDNASSFTM) lie on the Cytoplasmic side of the membrane.

This sequence belongs to the G-protein coupled receptor 1 family. As to expression, sperm. Mainly localized in the principal piece and neck region of the tail but is also found in the acrosomal region in a small percentage of sperm cells. Expressed in natural regulatory T cells (nTregs) and a subset of early thymocyte progenitor double-negative 1 (DN1) cells. Expressed in memory B cells. Expressed by IL17 producing helper T-cells (Th17), type 1 effector cells (Th1), type 2 effector cells (Th2) and regulatory T-cells (Treg) (at protein level). Expressed by Th17 cells in spleen, Peyers patches, and lamina propria of small and large intestine. Highly expressed in testis, lung, colon, and dendritic cells.

The protein resides in the cell membrane. It is found in the cell surface. In terms of biological role, receptor for the C-C type chemokine CCL20. Binds to CCL20 and subsequently transduces a signal by increasing the intracellular calcium ion levels. Although CCL20 is its major ligand it can also act as a receptor for non-chemokine ligands such as beta-defensins. Binds to defensin DEFB1 leading to increase in intracellular calcium ions and cAMP levels. Its binding to DEFB1 is essential for the function of DEFB1 in regulating sperm motility and bactericidal activity. Binds to defensins DEFB4 and DEFB4A/B and mediates their chemotactic effects. The ligand-receptor pair CCL20-CCR6 is responsible for the chemotaxis of dendritic cells (DC), effector/memory T-cells and B-cells and plays an important role at skin and mucosal surfaces under homeostatic and inflammatory conditions, as well as in pathology, including cancer and various autoimmune diseases. CCR6-mediated signals are essential for immune responses to microbes in the intestinal mucosa and in the modulation of inflammatory responses initiated by tissue insult and trauma. CCR6 is essential for the recruitment of both the pro-inflammatory IL17 producing helper T-cells (Th17) and the regulatory T-cells (Treg) to sites of inflammation. Required for the normal migration of Th17 cells in Peyers patches and other related tissue sites of the intestine and plays a role in regulating effector T-cell balance and distribution in inflamed intestine. Plays an important role in the coordination of early thymocyte precursor migration events important for normal subsequent thymocyte precursor development, but is not required for the formation of normal thymic natural regulatory T-cells (nTregs). Required for optimal differentiation of DN2 and DN3 thymocyte precursors. Essential for B-cell localization in the subepithelial dome of Peyers-patches and for efficient B-cell isotype switching to IgA in the Peyers-patches. Essential for appropriate anatomical distribution of memory B-cells in the spleen and for the secondary recall response of memory B-cells. Positively regulates sperm motility and chemotaxis via its binding to CCL20. The protein is C-C chemokine receptor type 6 (Ccr6) of Mus musculus (Mouse).